Here is a 518-residue protein sequence, read N- to C-terminus: Putative succinate-semialdehyde dehydrogenase [NADP(+)] 2 (518 aa).

NADP(+) contacts are provided by residues 157-158 (WN), 181-184 (KPDS), and 232-233 (GS). Residue E254 is the Proton acceptor of the active site. An NADP(+)-binding site is contributed by L255. C288 functions as the Nucleophile in the catalytic mechanism. Position 386 (E386) interacts with NADP(+).

This sequence belongs to the aldehyde dehydrogenase family.

It catalyses the reaction succinate semialdehyde + NADP(+) + H2O = succinate + NADPH + 2 H(+). In terms of biological role, catalyzes the NADP(+)-dependent oxidation of succinate semialdehyde to succinate. Although it has succinate semialdehyde dehydrogenase activity, is likely to act physiologically on a different aldehyde(s). In Mycobacterium ulcerans (strain Agy99), this protein is Putative succinate-semialdehyde dehydrogenase [NADP(+)] 2 (gabD2).